The sequence spans 248 residues: Cytochrome c oxidase subunit 2 (248 aa).

Residues 1 to 43 (MTNLLNNWLIINQFGYDLPEPWQLGLQDAAHPVMEEIIFFHDQ) lie on the Mitochondrial intermembrane side of the membrane. A helical transmembrane segment spans residues 44–65 (VMFILIIIITTVLWLIVKALSG). The Mitochondrial matrix portion of the chain corresponds to 66-79 (KAYHRYLVDGTLLE). The chain crosses the membrane as a helical span at residues 80–99 (IIWTIVPAIILILIAFPSLK). The Mitochondrial intermembrane portion of the chain corresponds to 100–248 (LLYLMDEVMD…INWVLSGSDE (149 aa)). Residues histidine 180, cysteine 215, glutamate 217, cysteine 219, histidine 223, and methionine 226 each coordinate Cu cation. Glutamate 217 contributes to the Mg(2+) binding site.

This sequence belongs to the cytochrome c oxidase subunit 2 family. Component of the cytochrome c oxidase (complex IV, CIV), a multisubunit enzyme composed of a catalytic core of 3 subunits and several supernumerary subunits. The complex exists as a monomer or a dimer and forms supercomplexes (SCs) in the inner mitochondrial membrane with ubiquinol-cytochrome c oxidoreductase (cytochrome b-c1 complex, complex III, CIII). Cu cation is required as a cofactor.

It is found in the mitochondrion inner membrane. The catalysed reaction is 4 Fe(II)-[cytochrome c] + O2 + 8 H(+)(in) = 4 Fe(III)-[cytochrome c] + 2 H2O + 4 H(+)(out). Component of the cytochrome c oxidase, the last enzyme in the mitochondrial electron transport chain which drives oxidative phosphorylation. The respiratory chain contains 3 multisubunit complexes succinate dehydrogenase (complex II, CII), ubiquinol-cytochrome c oxidoreductase (cytochrome b-c1 complex, complex III, CIII) and cytochrome c oxidase (complex IV, CIV), that cooperate to transfer electrons derived from NADH and succinate to molecular oxygen, creating an electrochemical gradient over the inner membrane that drives transmembrane transport and the ATP synthase. Cytochrome c oxidase is the component of the respiratory chain that catalyzes the reduction of oxygen to water. Electrons originating from reduced cytochrome c in the intermembrane space (IMS) are transferred via the dinuclear copper A center (CU(A)) of subunit 2 and heme A of subunit 1 to the active site in subunit 1, a binuclear center (BNC) formed by heme A3 and copper B (CU(B)). The BNC reduces molecular oxygen to 2 water molecules using 4 electrons from cytochrome c in the IMS and 4 protons from the mitochondrial matrix. This chain is Cytochrome c oxidase subunit 2 (COII), found in Metridium senile (Brown sea anemone).